A 520-amino-acid polypeptide reads, in one-letter code: Poly(A)-specific ribonuclease PNLDC1 (520 aa).

Aspartate 17, glutamate 19, aspartate 260, and aspartate 354 together coordinate Mg(2+). The chain crosses the membrane as a helical span at residues 497 to 513; sequence CLLQVCGIVTAWALLAF.

Belongs to the CAF1 family. Mg(2+) serves as cofactor.

It localises to the endoplasmic reticulum membrane. The catalysed reaction is Exonucleolytic cleavage of poly(A) to 5'-AMP.. In terms of biological role, 3'-exoribonuclease that has a preference for poly(A) tails of mRNAs, thereby efficiently degrading poly(A) tails. Exonucleolytic degradation of the poly(A) tail is often the first step in the decay of eukaryotic mRNAs and is also used to silence certain maternal mRNAs translationally during oocyte maturation and early embryonic development. May act as a regulator of multipotency in embryonic stem cells. Is a critical factor for proper spermatogenesis, involved in pre-piRNAs processing to generate mature piRNAs. The polypeptide is Poly(A)-specific ribonuclease PNLDC1 (Pongo abelii (Sumatran orangutan)).